A 125-amino-acid polypeptide reads, in one-letter code: Holo-[acyl-carrier-protein] synthase (125 aa).

2 residues coordinate Mg(2+): Asp-6 and Glu-55.

This sequence belongs to the P-Pant transferase superfamily. AcpS family. The cofactor is Mg(2+).

Its subcellular location is the cytoplasm. The enzyme catalyses apo-[ACP] + CoA = holo-[ACP] + adenosine 3',5'-bisphosphate + H(+). Its function is as follows. Transfers the 4'-phosphopantetheine moiety from coenzyme A to a Ser of acyl-carrier-protein. The protein is Holo-[acyl-carrier-protein] synthase of Chlorobium phaeovibrioides (strain DSM 265 / 1930) (Prosthecochloris vibrioformis (strain DSM 265)).